The following is a 309-amino-acid chain: Aspartate carbamoyltransferase catalytic subunit (309 aa).

Carbamoyl phosphate-binding residues include Arg-56 and Thr-57. Lys-84 is a binding site for L-aspartate. Positions 106, 136, and 139 each coordinate carbamoyl phosphate. Residues Arg-169 and Arg-221 each contribute to the L-aspartate site. The carbamoyl phosphate site is built by Ala-264 and Pro-265.

The protein belongs to the aspartate/ornithine carbamoyltransferase superfamily. ATCase family. In terms of assembly, heterododecamer (2C3:3R2) of six catalytic PyrB chains organized as two trimers (C3), and six regulatory PyrI chains organized as three dimers (R2).

It catalyses the reaction carbamoyl phosphate + L-aspartate = N-carbamoyl-L-aspartate + phosphate + H(+). It functions in the pathway pyrimidine metabolism; UMP biosynthesis via de novo pathway; (S)-dihydroorotate from bicarbonate: step 2/3. In terms of biological role, catalyzes the condensation of carbamoyl phosphate and aspartate to form carbamoyl aspartate and inorganic phosphate, the committed step in the de novo pyrimidine nucleotide biosynthesis pathway. This chain is Aspartate carbamoyltransferase catalytic subunit, found in Limosilactobacillus reuteri subsp. reuteri (strain JCM 1112) (Lactobacillus reuteri).